The primary structure comprises 520 residues: Cytosol aminopeptidase (520 aa).

Zn(2+)-binding residues include Lys-286 and Asp-291. The active site involves Lys-298. The Zn(2+) site is built by Asp-309, Asp-368, and Glu-370. Arg-372 is a catalytic residue.

This sequence belongs to the peptidase M17 family. As to quaternary structure, homohexamer. Requires Zn(2+) as cofactor.

It is found in the cytoplasm. The catalysed reaction is Release of an N-terminal amino acid, Xaa-|-Yaa-, in which Xaa is preferably Leu, but may be other amino acids including Pro although not Arg or Lys, and Yaa may be Pro. Amino acid amides and methyl esters are also readily hydrolyzed, but rates on arylamides are exceedingly low.. It catalyses the reaction Release of N-terminal proline from a peptide.. Functionally, presumably involved in the processing and regular turnover of intracellular proteins. Catalyzes the removal of unsubstituted N-terminal amino acids from various peptides. This chain is Cytosol aminopeptidase (lap), found in Dictyostelium discoideum (Social amoeba).